We begin with the raw amino-acid sequence, 307 residues long: Protoheme IX farnesyltransferase (307 aa).

Helical transmembrane passes span 31 to 51, 53 to 73, 103 to 123, 125 to 145, 153 to 173, 179 to 199, 223 to 243, 246 to 266, and 285 to 305; these read VTQLAVFCAIIGMFLATPGMV, WPVLIGGAAGIWLLAGAAFAI, TLVFSAILGGAGMWLLHVYAN, LTMWLTFATFLGYAVVYTILL, IVIGGLSGAMPPALGWAAVAG, AWFLVLIIFTWTPPHFWALAL, LLHILLYTLIMIAATLLPFVY, SGYIYLAAALALGAGFLAYAW, and ILYLSLLFAALLVDHYFKFVP.

It belongs to the UbiA prenyltransferase family. Protoheme IX farnesyltransferase subfamily.

It localises to the cell inner membrane. The enzyme catalyses heme b + (2E,6E)-farnesyl diphosphate + H2O = Fe(II)-heme o + diphosphate. It participates in porphyrin-containing compound metabolism; heme O biosynthesis; heme O from protoheme: step 1/1. Functionally, converts heme B (protoheme IX) to heme O by substitution of the vinyl group on carbon 2 of heme B porphyrin ring with a hydroxyethyl farnesyl side group. This chain is Protoheme IX farnesyltransferase, found in Cupriavidus taiwanensis (strain DSM 17343 / BCRC 17206 / CCUG 44338 / CIP 107171 / LMG 19424 / R1) (Ralstonia taiwanensis (strain LMG 19424)).